A 342-amino-acid polypeptide reads, in one-letter code: Heat-inducible transcription repressor HrcA (342 aa).

The protein belongs to the HrcA family.

Functionally, negative regulator of class I heat shock genes (grpE-dnaK-dnaJ and groELS operons). Prevents heat-shock induction of these operons. The sequence is that of Heat-inducible transcription repressor HrcA from Leptospira borgpetersenii serovar Hardjo-bovis (strain JB197).